The sequence spans 150 residues: Large ribosomal subunit protein bL9 (150 aa).

The protein belongs to the bacterial ribosomal protein bL9 family.

In terms of biological role, binds to the 23S rRNA. The polypeptide is Large ribosomal subunit protein bL9 (Alkalilimnicola ehrlichii (strain ATCC BAA-1101 / DSM 17681 / MLHE-1)).